A 711-amino-acid polypeptide reads, in one-letter code: Ribosomal RNA large subunit methyltransferase K/L (711 aa).

Residues 42 to 153 (DAQRAVLWSR…KGRATISVDL (112 aa)) enclose the THUMP domain.

It belongs to the methyltransferase superfamily. RlmKL family.

It is found in the cytoplasm. The catalysed reaction is guanosine(2445) in 23S rRNA + S-adenosyl-L-methionine = N(2)-methylguanosine(2445) in 23S rRNA + S-adenosyl-L-homocysteine + H(+). The enzyme catalyses guanosine(2069) in 23S rRNA + S-adenosyl-L-methionine = N(2)-methylguanosine(2069) in 23S rRNA + S-adenosyl-L-homocysteine + H(+). Its function is as follows. Specifically methylates the guanine in position 2445 (m2G2445) and the guanine in position 2069 (m7G2069) of 23S rRNA. In Xanthomonas oryzae pv. oryzae (strain KACC10331 / KXO85), this protein is Ribosomal RNA large subunit methyltransferase K/L.